Reading from the N-terminus, the 421-residue chain is UDP-N-acetylglucosamine 1-carboxyvinyltransferase (421 aa).

26–27 lines the phosphoenolpyruvate pocket; it reads KN. Residue R96 coordinates UDP-N-acetyl-alpha-D-glucosamine. D120 serves as the catalytic Proton donor. UDP-N-acetyl-alpha-D-glucosamine-binding residues include D308 and V330.

It belongs to the EPSP synthase family. MurA subfamily.

Its subcellular location is the cytoplasm. It catalyses the reaction phosphoenolpyruvate + UDP-N-acetyl-alpha-D-glucosamine = UDP-N-acetyl-3-O-(1-carboxyvinyl)-alpha-D-glucosamine + phosphate. It functions in the pathway cell wall biogenesis; peptidoglycan biosynthesis. In terms of biological role, cell wall formation. Adds enolpyruvyl to UDP-N-acetylglucosamine. The polypeptide is UDP-N-acetylglucosamine 1-carboxyvinyltransferase (Corynebacterium efficiens (strain DSM 44549 / YS-314 / AJ 12310 / JCM 11189 / NBRC 100395)).